A 351-amino-acid chain; its full sequence is Protein Tex24 (351 aa).

Disordered stretches follow at residues 69 to 101, 117 to 144, and 275 to 298; these read PSTA…PSLS, PEDR…AQGK, and EKVK…PKSM. The segment covering 73–83 has biased composition (basic residues); it reads HGKRKPGHLPR. Over residues 275–285 the composition is skewed to basic and acidic residues; it reads EKVKPSSHDMH.

Specific to testis, where it is expressed in spermatogonia.

Its subcellular location is the nucleus. In terms of biological role, nuclear factor which might have a role in spermatogenesis. The polypeptide is Protein Tex24 (Mus musculus (Mouse)).